We begin with the raw amino-acid sequence, 304 residues long: Prephenate dehydratase (304 aa).

In terms of domain architecture, Prephenate dehydratase spans 3-178; sequence RIAYFGPVGT…ARTRFLLMRR (176 aa). One can recognise an ACT domain in the interval 193 to 271; that stretch reads SIVAAAANRT…DVRFLGSFAR (79 aa).

The catalysed reaction is prephenate + H(+) = 3-phenylpyruvate + CO2 + H2O. Its pathway is amino-acid biosynthesis; L-phenylalanine biosynthesis; phenylpyruvate from prephenate: step 1/1. The sequence is that of Prephenate dehydratase (pheA) from Amycolatopsis methanolica.